We begin with the raw amino-acid sequence, 131 residues long: SPbeta prophage-derived uncharacterized protein YosD (131 aa).

Residues 102 to 131 (EHNNKKAKNNDTQNQRQIKTSWWQRLTKKD) are disordered. Over residues 111–125 (NDTQNQRQIKTSWWQ) the composition is skewed to polar residues.

This Bacillus subtilis (strain 168) protein is SPbeta prophage-derived uncharacterized protein YosD (yosD).